Reading from the N-terminus, the 500-residue chain is Protein adenylyltransferase Fic (500 aa).

The chain crosses the membrane as a helical span at residues 39–59 (LSFLIFFVIGSLFSGLMFALL). 2 TPR repeats span residues 122–155 (ALSS…SPRH) and 156–190 (PEIL…NPSH). The short motif at 247-252 (SVGIEG) is the Inhibitory (S/T)XXXE(G/N) motif element. Residues Glu-251 and 333–336 (VGGH) each bind ATP. One can recognise a Fido domain in the interval 302–437 (ITLKDLLEIH…IRPFVRFIAD (136 aa)). The active site involves His-380. ATP is bound by residues 384 to 391 (DGNGRTSR), 416 to 417 (YY), and Asn-424. The tract at residues 477–500 (GREGGSTVHEGSGTGDSIRIGTMW) is disordered.

This sequence belongs to the fic family. Homodimer.

It localises to the membrane. The enzyme catalyses L-tyrosyl-[protein] + ATP = O-(5'-adenylyl)-L-tyrosyl-[protein] + diphosphate. The catalysed reaction is L-threonyl-[protein] + ATP = 3-O-(5'-adenylyl)-L-threonyl-[protein] + diphosphate. It carries out the reaction 3-O-(5'-adenylyl)-L-threonyl-[protein] + H2O = L-threonyl-[protein] + AMP + H(+). The side chain of Glu-251 determines which of the two opposing activities (AMPylase or de-AMPylase) will take place. In response to endoplasmic reticulum stress, mediates de-AMPylase activity. Adenylyltransferase activity is inhibited by the inhibitory helix present at the N-terminus: Glu-251 binds ATP and competes with ATP-binding at Arg-391, thereby preventing adenylyltransferase activity. In unstressed cells, disengagement of Glu-251 promotes adenylyltransferase activity. Activation dissociates ATP-binding from Glu-251, allowing ordered binding of the entire ATP moiety with the alpha-phosphate in an orientation that is productive for accepting an incoming target hydroxyl side chain. Its function is as follows. Protein that can both mediate the addition of adenosine 5'-monophosphate (AMP) to specific residues of target proteins (AMPylation), and the removal of the same modification from target proteins (de-AMPylation), depending on the context. The side chain of Glu-251 determines which of the two opposing activities (AMPylase or de-AMPylase) will take place. Acts as a key regulator of the unfolded protein response (UPR) by mediating AMPylation or de-AMPylation of Hsc70-3/BiP. In unstressed cells, acts as an adenylyltransferase by mediating AMPylation of Hsc70-3/BiP at 'Thr-518', thereby inactivating it. In response to endoplasmic reticulum stress, acts as a phosphodiesterase by mediating removal of ATP (de-AMPylation) from Hsc70-3/BiP at 'Thr-518', leading to restore HSPA5/BiP activity. The polypeptide is Protein adenylyltransferase Fic (Culex quinquefasciatus (Southern house mosquito)).